Reading from the N-terminus, the 249-residue chain is Probable transcriptional regulatory protein ZMO0153 (249 aa).

This sequence belongs to the TACO1 family.

It is found in the cytoplasm. The protein is Probable transcriptional regulatory protein ZMO0153 of Zymomonas mobilis subsp. mobilis (strain ATCC 31821 / ZM4 / CP4).